The chain runs to 107 residues: Putative double-stranded DNA mimic protein Spro_2690 (107 aa).

Belongs to the putative dsDNA mimic protein family.

Its function is as follows. May act as a double-stranded DNA (dsDNA) mimic. Probably regulates the activity of a dsDNA-binding protein. This chain is Putative double-stranded DNA mimic protein Spro_2690, found in Serratia proteamaculans (strain 568).